The chain runs to 586 residues: Dihydroxy-acid dehydratase 2 (586 aa).

Cys68 is a [2Fe-2S] cluster binding site. Asp100 contributes to the Mg(2+) binding site. Position 141 (Cys141) interacts with [2Fe-2S] cluster. The Mg(2+) site is built by Asp142 and Lys143. The residue at position 143 (Lys143) is an N6-carboxylysine. Cys213 serves as a coordination point for [2Fe-2S] cluster. Glu463 contacts Mg(2+). The active-site Proton acceptor is Ser489.

It belongs to the IlvD/Edd family. Homodimer. Requires [2Fe-2S] cluster as cofactor. Mg(2+) is required as a cofactor.

The enzyme catalyses (2R)-2,3-dihydroxy-3-methylbutanoate = 3-methyl-2-oxobutanoate + H2O. It carries out the reaction (2R,3R)-2,3-dihydroxy-3-methylpentanoate = (S)-3-methyl-2-oxopentanoate + H2O. The protein operates within amino-acid biosynthesis; L-isoleucine biosynthesis; L-isoleucine from 2-oxobutanoate: step 3/4. Its pathway is amino-acid biosynthesis; L-valine biosynthesis; L-valine from pyruvate: step 3/4. Its function is as follows. Functions in the biosynthesis of branched-chain amino acids. Catalyzes the dehydration of (2R,3R)-2,3-dihydroxy-3-methylpentanoate (2,3-dihydroxy-3-methylvalerate) into 2-oxo-3-methylpentanoate (2-oxo-3-methylvalerate) and of (2R)-2,3-dihydroxy-3-methylbutanoate (2,3-dihydroxyisovalerate) into 2-oxo-3-methylbutanoate (2-oxoisovalerate), the penultimate precursor to L-isoleucine and L-valine, respectively. This Mesorhizobium japonicum (strain LMG 29417 / CECT 9101 / MAFF 303099) (Mesorhizobium loti (strain MAFF 303099)) protein is Dihydroxy-acid dehydratase 2.